The chain runs to 657 residues: uncharacterized protein (657 aa).

Residues Ser518 and His631 each act as charge relay system in the active site.

The protein belongs to the peptidase S9C family.

This is an uncharacterized protein from Bacillus subtilis (strain 168).